The chain runs to 272 residues: Octanoyltransferase (272 aa).

The span at 1–12 (MQQDPPTSQPHT) shows a compositional bias: polar residues. The tract at residues 1–20 (MQQDPPTSQPHTPQIVDGVK) is disordered. In terms of domain architecture, BPL/LPL catalytic spans 65–255 (HQRPNTVIYV…EMMSFQPYEM (191 aa)). Residues 103–110 (RGGEITWH), 175–177 (AIG), and 188–190 (GFA) each bind substrate. The Acyl-thioester intermediate role is filled by Cys-206.

The protein belongs to the LipB family.

The protein localises to the cytoplasm. The enzyme catalyses octanoyl-[ACP] + L-lysyl-[protein] = N(6)-octanoyl-L-lysyl-[protein] + holo-[ACP] + H(+). It functions in the pathway protein modification; protein lipoylation via endogenous pathway; protein N(6)-(lipoyl)lysine from octanoyl-[acyl-carrier-protein]: step 1/2. Catalyzes the transfer of endogenously produced octanoic acid from octanoyl-acyl-carrier-protein onto the lipoyl domains of lipoate-dependent enzymes. Lipoyl-ACP can also act as a substrate although octanoyl-ACP is likely to be the physiological substrate. The sequence is that of Octanoyltransferase from Cutibacterium acnes (strain DSM 16379 / KPA171202) (Propionibacterium acnes).